Consider the following 87-residue polypeptide: MINSKIIILNNNKVIYYKPQNITLISILEKNDIILDSQCKQGYCGSCRIKLLKGHVYYKNIFPLASCKPKDIFPCCCTISGSILIKI.

The region spanning 4–87 (SKIIILNNNK…TISGSILIKI (84 aa)) is the 2Fe-2S ferredoxin-type domain. [2Fe-2S] cluster-binding residues include Cys39, Cys44, Cys47, and Cys75.

[2Fe-2S] cluster serves as cofactor.

This is an uncharacterized protein from Buchnera aphidicola subsp. Baizongia pistaciae (strain Bp).